Here is a 205-residue protein sequence, read N- to C-terminus: GTP-binding protein yptV5 (205 aa).

Residue 15–22 (GDSGVGKT) coordinates GTP. Residues 37–45 (YKATIGADF) carry the Effector region motif. GTP contacts are provided by residues 63–67 (DTAGQ) and 125–128 (NKID). 2 S-geranylgeranyl cysteine lipidation sites follow: C204 and C205.

The protein belongs to the small GTPase superfamily. Rab family.

The protein localises to the cell membrane. Its function is as follows. Protein transport. Probably involved in vesicular traffic. This Volvox carteri (Green alga) protein is GTP-binding protein yptV5 (YPTV5).